A 301-amino-acid chain; its full sequence is UDP-N-acetylenolpyruvoylglucosamine reductase (301 aa).

Positions 30 to 194 constitute an FAD-binding PCMH-type domain; the sequence is VGGEADYLVF…LSVKFALAPG (165 aa). R173 is a catalytic residue. S223 serves as the catalytic Proton donor. The active site involves E293.

It belongs to the MurB family. The cofactor is FAD.

The protein localises to the cytoplasm. It catalyses the reaction UDP-N-acetyl-alpha-D-muramate + NADP(+) = UDP-N-acetyl-3-O-(1-carboxyvinyl)-alpha-D-glucosamine + NADPH + H(+). It participates in cell wall biogenesis; peptidoglycan biosynthesis. Functionally, cell wall formation. The protein is UDP-N-acetylenolpyruvoylglucosamine reductase of Streptococcus pneumoniae (strain Hungary19A-6).